The chain runs to 163 residues: NADH-quinone oxidoreductase subunit I (163 aa).

2 consecutive 4Fe-4S ferredoxin-type domains span residues 54–84 (LRRY…IESD) and 94–123 (TRYD…ETHI). 8 residues coordinate [4Fe-4S] cluster: Cys64, Cys67, Cys70, Cys74, Cys103, Cys106, Cys109, and Cys113.

This sequence belongs to the complex I 23 kDa subunit family. In terms of assembly, NDH-1 is composed of 14 different subunits. Subunits NuoA, H, J, K, L, M, N constitute the membrane sector of the complex. It depends on [4Fe-4S] cluster as a cofactor.

The protein localises to the cell inner membrane. It catalyses the reaction a quinone + NADH + 5 H(+)(in) = a quinol + NAD(+) + 4 H(+)(out). Its function is as follows. NDH-1 shuttles electrons from NADH, via FMN and iron-sulfur (Fe-S) centers, to quinones in the respiratory chain. The immediate electron acceptor for the enzyme in this species is believed to be ubiquinone. Couples the redox reaction to proton translocation (for every two electrons transferred, four hydrogen ions are translocated across the cytoplasmic membrane), and thus conserves the redox energy in a proton gradient. This is NADH-quinone oxidoreductase subunit I from Cupriavidus metallidurans (strain ATCC 43123 / DSM 2839 / NBRC 102507 / CH34) (Ralstonia metallidurans).